The sequence spans 141 residues: NADPH-dependent 7-cyano-7-deazaguanine reductase (141 aa).

Residue Cys56 is the Thioimide intermediate of the active site. Asp63 acts as the Proton donor in catalysis. Residues 78-80 (VEL) and 97-98 (HE) each bind substrate.

The protein belongs to the GTP cyclohydrolase I family. QueF type 1 subfamily.

Its subcellular location is the cytoplasm. It carries out the reaction 7-aminomethyl-7-carbaguanine + 2 NADP(+) = 7-cyano-7-deazaguanine + 2 NADPH + 3 H(+). It participates in tRNA modification; tRNA-queuosine biosynthesis. Functionally, catalyzes the NADPH-dependent reduction of 7-cyano-7-deazaguanine (preQ0) to 7-aminomethyl-7-deazaguanine (preQ1). In Trichodesmium erythraeum (strain IMS101), this protein is NADPH-dependent 7-cyano-7-deazaguanine reductase.